The chain runs to 525 residues: Delta(24)-sterol reductase homolog dhcr-24 (525 aa).

The next 2 helical transmembrane spans lie at Trp-27 to Phe-47 and Ser-214 to Ile-234. The 193-residue stretch at Phe-47 to Cys-239 folds into the FAD-binding PCMH-type domain.

Belongs to the FAD-binding oxidoreductase/transferase type 4 family. FAD is required as a cofactor.

The protein localises to the endoplasmic reticulum membrane. The protein resides in the golgi apparatus membrane. The catalysed reaction is cholesterol + NADP(+) = desmosterol + NADPH + H(+). It carries out the reaction lanosterol + NADPH + H(+) = 24,25-dihydrolanosterol + NADP(+). The enzyme catalyses 5alpha-cholest-8-en-3beta-ol + NADP(+) = zymosterol + NADPH + H(+). It participates in steroid biosynthesis; cholesterol biosynthesis. In terms of biological role, catalyzes the reduction of the delta-24 double bond of sterol intermediates during cholesterol biosynthesis. The polypeptide is Delta(24)-sterol reductase homolog dhcr-24 (Caenorhabditis elegans).